A 118-amino-acid chain; its full sequence is Superoxide-generating NADPH oxidase light chain subunit (118 aa).

The next 4 membrane-spanning stretches (helical) occupy residues 9–29, 36–56, 62–82, and 83–103; these read WAAM…IMGI, IAIY…PLSF, AIFH…VLCY, and FLVP…VFLI.

This sequence belongs to the p22phox family. As to quaternary structure, composed of a heavy chain and a light chain.

It is found in the cell membrane. In terms of biological role, critical component of the membrane-bound oxidase of phagocytes that generates superoxide. The protein is Superoxide-generating NADPH oxidase light chain subunit (cybA) of Dictyostelium discoideum (Social amoeba).